A 511-amino-acid chain; its full sequence is Maturase K (511 aa).

Belongs to the intron maturase 2 family. MatK subfamily.

It is found in the plastid. Its subcellular location is the chloroplast. Usually encoded in the trnK tRNA gene intron. Probably assists in splicing its own and other chloroplast group II introns. The polypeptide is Maturase K (Nandina domestica (Heavenly bamboo)).